Reading from the N-terminus, the 301-residue chain is Probable alpha-L-glutamate ligase 1 (301 aa).

Residues 104-287 (LQLLSRKGIG…VTEPIVEYIE (184 aa)) enclose the ATP-grasp domain. ATP-binding positions include K141, 178 to 179 (EY), D187, and 211 to 213 (RSN). 3 residues coordinate Mg(2+): D248, E260, and N262. Mn(2+)-binding residues include D248, E260, and N262.

Belongs to the RimK family. Requires Mg(2+) as cofactor. It depends on Mn(2+) as a cofactor.

This is Probable alpha-L-glutamate ligase 1 from Shewanella sp. (strain W3-18-1).